The chain runs to 511 residues: 2-isopropylmalate synthase (511 aa).

One can recognise a Pyruvate carboxyltransferase domain in the interval 6-269 (IIIFDTTLRD…YTDIKCENIS (264 aa)). Residues Asp15, His203, His205, and Asn239 each contribute to the Mn(2+) site. The regulatory domain stretch occupies residues 394–511 (VLEKLSVISG…SLKVEERKMA (118 aa)).

This sequence belongs to the alpha-IPM synthase/homocitrate synthase family. LeuA type 1 subfamily. Homodimer. Mn(2+) is required as a cofactor.

Its subcellular location is the cytoplasm. The enzyme catalyses 3-methyl-2-oxobutanoate + acetyl-CoA + H2O = (2S)-2-isopropylmalate + CoA + H(+). It functions in the pathway amino-acid biosynthesis; L-leucine biosynthesis; L-leucine from 3-methyl-2-oxobutanoate: step 1/4. Its function is as follows. Catalyzes the condensation of the acetyl group of acetyl-CoA with 3-methyl-2-oxobutanoate (2-ketoisovalerate) to form 3-carboxy-3-hydroxy-4-methylpentanoate (2-isopropylmalate). The protein is 2-isopropylmalate synthase of Campylobacter jejuni subsp. doylei (strain ATCC BAA-1458 / RM4099 / 269.97).